A 102-amino-acid polypeptide reads, in one-letter code: Protein ORF28 (102 aa).

The chain crosses the membrane as a helical span at residues 28 to 48 (VIGLITVLFLLVIGACVYCCI).

The protein localises to the host membrane. This is Protein ORF28 (ORF28) from Homo sapiens (Human).